The primary structure comprises 1099 residues: Inverted formin-2 (1099 aa).

Positions M1–Q330 constitute a GBD/FH3 domain. Basic and acidic residues-rich tracts occupy residues S348–T359 and Q367–P385. Disordered regions lie at residues S348–P391, P432–P509, and A1000–N1019. Residues T426–P569 form the FH1 domain. Residues P452–P499 are compositionally biased toward pro residues. One can recognise an FH2 domain in the interval F621 to D1009. A coiled-coil region spans residues L907 to N1019. Residues D1037–T1052 form the WH2 domain. Positions K1064–P1085 are disordered. A compositionally biased stretch (basic and acidic residues) spans N1071–E1083.

This sequence belongs to the formin homology family.

This is Inverted formin-2 (inf2) from Xenopus laevis (African clawed frog).